Here is a 417-residue protein sequence, read N- to C-terminus: Chaperone SurA (417 aa).

The first 12 residues, 1–12, serve as a signal peptide directing secretion; that stretch reads MGAALLCSFAHA. PpiC domains lie at 163-264 and 273-372; these read SEEY…KLEE and RDEV…QVLG.

The protein localises to the periplasm. It carries out the reaction [protein]-peptidylproline (omega=180) = [protein]-peptidylproline (omega=0). Functionally, chaperone involved in the correct folding and assembly of outer membrane proteins. Recognizes specific patterns of aromatic residues and the orientation of their side chains, which are found more frequently in integral outer membrane proteins. May act in both early periplasmic and late outer membrane-associated steps of protein maturation. This is Chaperone SurA from Pseudomonas aeruginosa (strain ATCC 15692 / DSM 22644 / CIP 104116 / JCM 14847 / LMG 12228 / 1C / PRS 101 / PAO1).